The following is a 123-amino-acid chain: MIQPQTLLNVADNSGARKLMCIRVIGAAGNQRYARIGDVIIAVIKDAVPQMPLERSEVIRAVIVRTRKEFKGDDGIIIRYDDNAAVIIDQKGNPKGTRVFGAVAEELRELNYTKIVSLAPEVL.

The protein belongs to the universal ribosomal protein uL14 family. In terms of assembly, part of the 50S ribosomal subunit.

It is found in the plastid. The protein localises to the chloroplast. Binds to 23S rRNA. The sequence is that of Large ribosomal subunit protein uL14c from Saccharum hybrid (Sugarcane).